A 234-amino-acid polypeptide reads, in one-letter code: Thymidylate kinase (234 aa).

20-27 (GIDASGKT) serves as a coordination point for ATP.

Belongs to the thymidylate kinase family.

The enzyme catalyses dTMP + ATP = dTDP + ADP. In terms of biological role, phosphorylation of dTMP to form dTDP in both de novo and salvage pathways of dTTP synthesis. The chain is Thymidylate kinase from Mycoplasmopsis pulmonis (strain UAB CTIP) (Mycoplasma pulmonis).